Reading from the N-terminus, the 223-residue chain is Ribose-5-phosphate isomerase A (223 aa).

Substrate-binding positions include 32–35 (TGST), 83–86 (DGAD), and 96–99 (KGGG). Residue Glu-105 is the Proton acceptor of the active site. Lys-123 contributes to the substrate binding site.

It belongs to the ribose 5-phosphate isomerase family. In terms of assembly, homodimer.

It catalyses the reaction aldehydo-D-ribose 5-phosphate = D-ribulose 5-phosphate. The protein operates within carbohydrate degradation; pentose phosphate pathway; D-ribose 5-phosphate from D-ribulose 5-phosphate (non-oxidative stage): step 1/1. In terms of biological role, catalyzes the reversible conversion of ribose-5-phosphate to ribulose 5-phosphate. This Acinetobacter baumannii (strain SDF) protein is Ribose-5-phosphate isomerase A.